We begin with the raw amino-acid sequence, 481 residues long: UDP-glycosyltransferase 71K2 (481 aa).

UDP-alpha-D-glucose contacts are provided by residues S285, 350–351 (WA), 368–376 (HCGWNSILE), and 390–393 (YAEQ).

Belongs to the UDP-glycosyltransferase family.

Glycosyltransferase that possesses chalcone and flavonol 2'-O-glycosyltransferase activity. Converts phloretin to phlorizin (phloretin 2'-O-glucoside), a potent antioxidant. Possesses glycosyltransferase activity toward quercetin, isoliquiritigenin, butein and caffeic acid. This Pyrus communis (Pear) protein is UDP-glycosyltransferase 71K2.